Consider the following 282-residue polypeptide: UPF0761 membrane protein HAPS_1376 (282 aa).

The next 6 helical transmembrane spans lie at 32-52 (LLSL…LPIF), 89-109 (MGII…SSID), 124-144 (VILS…FAGA), 170-190 (LLKF…YLIV), 202-222 (VGAL…IWYI), and 234-254 (ALAT…VVLL).

It belongs to the UPF0761 family.

Its subcellular location is the cell inner membrane. This Glaesserella parasuis serovar 5 (strain SH0165) (Haemophilus parasuis) protein is UPF0761 membrane protein HAPS_1376.